Consider the following 4059-residue polypeptide: Fibrocystin (4059 aa).

Positions 1-18 (MMLAWLVSLLSMEVLLLA) are cleaved as a signal peptide. The Extracellular segment spans residues 19–3851 (KPYSSFQFEP…LPVASKERST (3833 aa)). One can recognise an IPT/TIG 1; atypical domain in the interval 25 to 109 (QFEPAEGSLA…AGPYSLEMRS (85 aa)). 2 N-linked (GlcNAc...) asparagine glycosylation sites follow: asparagine 55 and asparagine 224. 2 consecutive IPT/TIG domains span residues 135 to 230 (PVLY…FSVF) and 257 to 333 (PEIL…FEVG). The region spanning 323 to 483 (AGNRGLRFEV…TWLNPDVVNT (161 aa)) is the PA14 domain. Residues asparagine 355, asparagine 385, asparagine 518, asparagine 527, asparagine 620, asparagine 639, asparagine 709, asparagine 867, asparagine 965, asparagine 975, asparagine 1082, asparagine 1114, asparagine 1133, asparagine 1239, asparagine 1273, asparagine 1308, asparagine 1319, asparagine 1344, asparagine 1373, asparagine 1456, asparagine 1471, asparagine 1528, asparagine 1613, asparagine 1627, asparagine 1694, asparagine 1760, asparagine 1775, asparagine 1875, asparagine 1879, asparagine 1915, asparagine 1955, asparagine 2030, and asparagine 2139 are each glycosylated (N-linked (GlcNAc...) asparagine). IPT/TIG domains lie at 945-997 (LVHF…FMLV) and 1017-1100 (PRLD…AFTY). Residues 1106–1190 (PVIVSLSRNR…IRSQGVDLYI (85 aa)) enclose the IPT/TIG 6; atypical domain. The region spanning 1198–1266 (SVEPCSGSLL…RADVLTVLAS (69 aa)) is the IPT/TIG 7 domain. In terms of domain architecture, IPT/TIG 8; atypical spans 1297–1378 (PVVTAMWGEF…MGFANMSVVP (82 aa)). The 82-residue stretch at 1385 to 1466 (PQIIAIFPTH…ITVLVNGLTS (82 aa)) folds into the IPT/TIG 9 domain. IPT/TIG domains are found at residues 1482-1566 (PIVD…RNFF) and 1569-1637 (PQVL…IDVN). One can recognise an IPT/TIG 12; atypical domain in the interval 1654–1738 (PELLSVSRSQ…VLRATVTSVT (85 aa)). Residues 1928–2049 (HSWFPQRVPH…PEVTVTYLQA (122 aa)) enclose the G8 1 domain. 2 PbH1 repeats span residues 2244 to 2266 (TWGL…LLGS) and 2287 to 2321 (EQGS…YTFS). An N-linked (GlcNAc...) asparagine glycan is attached at asparagine 2380. 2 PbH1 repeats span residues 2404-2426 (SNNL…DILE) and 2459-2481 (RWEL…AIRT). N-linked (GlcNAc...) asparagine glycosylation is found at asparagine 2466, asparagine 2503, asparagine 2529, asparagine 2547, asparagine 2581, asparagine 2589, asparagine 2627, asparagine 2747, and asparagine 2762. Residues 2741–2867 (KGWGGYNHTI…PKKSWVHLGA (127 aa)) form the G8 2 domain. 2 PbH1 repeats span residues 3004–3026 (SAGS…HASS) and 3027–3049 (SHGV…DVEG). Asparagine 3051 carries an N-linked (GlcNAc...) asparagine glycan. The PbH1 7 repeat unit spans residues 3080–3102 (AEDIILHGNVVAGSERLGFHVGG). N-linked (GlcNAc...) asparagine glycosylation is found at asparagine 3133 and asparagine 3162. The stretch at 3188–3212 (TVQITLRNSVIVATSSSFDCIHDRK) is one PbH1 8 repeat. N-linked (GlcNAc...) asparagine glycans are attached at residues asparagine 3218, asparagine 3719, and asparagine 3831. A helical membrane pass occupies residues 3852 to 3872 (IILALSLCSVASWVALSCLVC). Positions 3869-3886 (CLVCCWFKKSKTRKIKPE) are ciliary targeting sequence (CST). Residues 3873-4059 (CWFKKSKTRK…LHTAPPETIQ (187 aa)) lie on the Cytoplasmic side of the membrane. Residues 3885-3898 (PEDISESQAKEQKK) show a composition bias toward basic and acidic residues. Residues 3885-3915 (PEDISESQAKEQKKNTHNSSKPRGLQAKTAK) form a disordered region. The nuclear localization signal (NLS) stretch occupies residues 3946 to 3970 (KRKVSRLAVTEERTTTPAPKIPRIT). A disordered region spans residues 4015 to 4038 (QERKQGQEPSQLDKGSDCTGLSQE).

As to quaternary structure, interacts with CAMLG. Interacts with PKD2. Interacts (via CST) with ARF4; this interaction allows an efficient PKHD1 trafficking to the cilium. Interacts (via CST) with RAB8A; this interaction controls trafficking through the endomembrane systeme and to the cilium. Interacts (via CST) with TULP3; this interaction allows PKHD1 trafficking to the cilium. Palmitoylated. Palmitoylation facilitates the trafficking to the cilia and membrane targeting. In terms of processing, N-glycosylated. Post-translationally, several proteolytic cleavages occur within the extracellular domain, whereas at least one cleavage occurs within the cytoplasmic domain. Cleaved by a probable proprotein convertase which produces an extracellular domain (polyductin extracellular domain, (PECD)) and a C-terminal fragment (polyductin transmembrane fragment (PTM)) which are tethered together by disulfide bonds. This extracellular domain (PECD) is then shed from the primary cilium by activation of a member of the ADAM metalloproteinase disintegrins family, resulting in concomitant release of an intra-cellular C-terminal fragment (ICD) via a gamma-secretase-dependent process. The proteolytic cleavage of the C-terminal intracellular fragment (ICD) is controlled by cytosolic calcium concentration and activation of PKC. In terms of tissue distribution, expressed in bile ducts and distal nephron segments but is absent from the proximal tubule. Expressed in pancreas and kidney but also in the liver. Expressed primarily in the distal tubule and thick ascending limb of the loop of Henle, and at low-level in the proximal tubule before renal development is complete at P0.

It localises to the cell membrane. Its subcellular location is the cytoplasm. It is found in the apical cell membrane. The protein resides in the cytoskeleton. The protein localises to the cilium basal body. It localises to the cell projection. Its subcellular location is the cilium. It is found in the spindle. The protein resides in the chromosome. The protein localises to the centromere. It localises to the nucleus. Its subcellular location is the secreted. It is found in the extracellular exosome. The protein resides in the endoplasmic reticulum. The protein localises to the golgi apparatus. Its function is as follows. Promotes ciliogenesis in renal epithelial cells and therefore participates in the tubules formation and/or ensures the maintenance of the architecture of the lumen of the kidney. Has an impact on cellular symmetry by ensuring correct bipolar cell division through the regulation of centrosome duplication and mitotic spindle assembly and by maintaining oriented cell division (OCD) during tubular elongation through planar cell polarity (PCP) pathway. During epithelial cell morphogenesis, it also regulates cell-cell and cell-matrix adhesion and participates in cell motility. Promotes cell-cell contact through the positive regulation of PTK2 kinase activity leading to either positive regulation of epithelial cell proliferation through the HRAS/RAF1 pathways, or negative regulation of apoptosis through the PDK1/AKT1 pathway. May act in collecting-duct and biliary differentiation. May participate in the regulation of the cholangiocytes proliferation and the CCN2 production in an CXCL8-dependent manner. The sequence is that of Fibrocystin from Mus musculus (Mouse).